We begin with the raw amino-acid sequence, 772 residues long: Ion-translocating oxidoreductase complex subunit C (772 aa).

4Fe-4S ferredoxin-type domains follow at residues 369-397 (GEPQ…QQLY) and 407-436 (KATT…VQYF). Residues C377, C380, C383, C387, C416, C419, C422, and C426 each contribute to the [4Fe-4S] cluster site. The tract at residues 599–748 (KARKLEQQQA…EPEEQVDPRK (150 aa)) is disordered.

Belongs to the 4Fe4S bacterial-type ferredoxin family. RnfC subfamily. In terms of assembly, the complex is composed of six subunits: RsxA, RsxB, RsxC, RsxD, RsxE and RsxG. The cofactor is [4Fe-4S] cluster.

The protein resides in the cell inner membrane. In terms of biological role, part of a membrane-bound complex that couples electron transfer with translocation of ions across the membrane. Required to maintain the reduced state of SoxR. The protein is Ion-translocating oxidoreductase complex subunit C of Shigella dysenteriae serotype 1 (strain Sd197).